The primary structure comprises 433 residues: MPDYLGADQRKTKEDEKDDKPIRALDEGDIALLKTYGQSTYSRQIKQVEDDIQQLLKKINELTGIKESDTGLAPPALWDLAADKQTLQSEQPLQVARCTKIINADSEDPKYIINVKQFAKFVVDLSDQVAPTDIEEGMRVGVDRNKYQIHIPLPPKIDPTVTMMQVEEKPDVTYSDVGGCKEQIEKLREVVETPLLHPERFVNLGIEPPKGVLLFGPPGTGKTLCARAVANRTDACFIRVIGSELVQKYVGEGARMVRELFEMARTKKACLIFFDEIDAIGGARFDDGAGGDNEVQRTMLELINQLDGFDPRGNIKVLMATNRPDTLDPALMRPGRLDRKIEFSLPDLEGRTHIFKIHARSMSVERDIRFELLARLCPNSTGAEIRSVCTEAGMFAIRARRKIATEKDFLEAVNKVIKSYAKFSATPRYMTYN.

The segment at 1–22 is disordered; it reads MPDYLGADQRKTKEDEKDDKPI. A compositionally biased stretch (basic and acidic residues) spans 8 to 22; the sequence is DQRKTKEDEKDDKPI. Lys-116 carries the post-translational modification N6-acetyllysine. An ATP-binding site is contributed by 216–223; that stretch reads GPPGTGKT. Lys-422 bears the N6-acetyllysine mark.

It belongs to the AAA ATPase family. As to quaternary structure, component of the 19S proteasome regulatory particle complex. The 26S proteasome consists of a 20S core particle (CP) and two 19S regulatory subunits (RP). The regulatory particle is made of a lid composed of 9 subunits, a base containing 6 ATPases including PSMC2 and few additional components. Interacts with NDC80/HEC; this interaction is detected only during M phase. Interacts and SQSTM1. Interacts with PAAF1. Directly interacts with TRIM5. In terms of processing, monoubiquitinated by RNF181. Phosphorylated. Dephosphorylated by UBLCP1 which impairs PSMC2 ATPase activity and disrupts 26S proteasome assembly.

The protein localises to the cytoplasm. It localises to the nucleus. Functionally, component of the 26S proteasome, a multiprotein complex involved in the ATP-dependent degradation of ubiquitinated proteins. This complex plays a key role in the maintenance of protein homeostasis by removing misfolded or damaged proteins, which could impair cellular functions, and by removing proteins whose functions are no longer required. Therefore, the proteasome participates in numerous cellular processes, including cell cycle progression, apoptosis, or DNA damage repair. PSMC2 belongs to the heterohexameric ring of AAA (ATPases associated with diverse cellular activities) proteins that unfolds ubiquitinated target proteins that are concurrently translocated into a proteolytic chamber and degraded into peptides. The protein is 26S proteasome regulatory subunit 7 (PSMC2) of Bos taurus (Bovine).